A 323-amino-acid chain; its full sequence is Ribose-phosphate pyrophosphokinase 2 (323 aa).

ATP-binding positions include 43–45 (DGE) and 102–103 (RQ). Mg(2+) contacts are provided by histidine 136 and aspartate 177. The active site involves lysine 200. D-ribose 5-phosphate-binding positions include arginine 202, aspartate 226, and 230-234 (DTAGT).

This sequence belongs to the ribose-phosphate pyrophosphokinase family. Class I subfamily. Homohexamer. Mg(2+) serves as cofactor.

It is found in the cytoplasm. It catalyses the reaction D-ribose 5-phosphate + ATP = 5-phospho-alpha-D-ribose 1-diphosphate + AMP + H(+). It functions in the pathway metabolic intermediate biosynthesis; 5-phospho-alpha-D-ribose 1-diphosphate biosynthesis; 5-phospho-alpha-D-ribose 1-diphosphate from D-ribose 5-phosphate (route I): step 1/1. Its function is as follows. Involved in the biosynthesis of the central metabolite phospho-alpha-D-ribosyl-1-pyrophosphate (PRPP) via the transfer of pyrophosphoryl group from ATP to 1-hydroxyl of ribose-5-phosphate (Rib-5-P). The polypeptide is Ribose-phosphate pyrophosphokinase 2 (Enterococcus faecalis (strain ATCC 700802 / V583)).